Reading from the N-terminus, the 76-residue chain is Conotoxin Gla(1)-TxVI (76 aa).

An N-terminal signal peptide occupies residues Met1–Ala19. Residues Leu20 to Arg45 constitute a propeptide that is removed on maturation. A 6'-bromotryptophan modification is found at Trp48. Residue Glu50 is modified to 4-carboxyglutamate. 3 disulfides stabilise this stretch: Cys51–Cys65, Cys58–Cys69, and Cys64–Cys73. Pro61 carries the post-translational modification 4-hydroxyproline. 4-carboxyglutamate is present on residues Glu63, Glu67, and Glu70. Residue Trp76 is modified to 6'-bromotryptophan.

As to expression, expressed by the venom duct.

Its subcellular location is the secreted. The protein is Conotoxin Gla(1)-TxVI of Conus textile (Cloth-of-gold cone).